The primary structure comprises 206 residues: Large ribosomal subunit protein uL4 (206 aa).

A disordered region spans residues 47–94 (NRAQKGRSEIAKSTRKPFRQKGTGNARAGMASSPLWRGGGKIFPNSPD).

It belongs to the universal ribosomal protein uL4 family. As to quaternary structure, part of the 50S ribosomal subunit.

Its function is as follows. One of the primary rRNA binding proteins, this protein initially binds near the 5'-end of the 23S rRNA. It is important during the early stages of 50S assembly. It makes multiple contacts with different domains of the 23S rRNA in the assembled 50S subunit and ribosome. In terms of biological role, forms part of the polypeptide exit tunnel. The sequence is that of Large ribosomal subunit protein uL4 from Azoarcus sp. (strain BH72).